A 408-amino-acid polypeptide reads, in one-letter code: 4-O-methyl-glucuronoyl methylesterase 1 (408 aa).

Positions Met-1–Ala-19 are cleaved as a signal peptide. Intrachain disulfides connect Cys-31-Cys-65, Cys-218-Cys-354, and Cys-250-Cys-326. Positions Gly-217 to Gly-222 match the GXSYXG catalytic site motif motif. Ser-219 (nucleophile) is an active-site residue. Substrate is bound by residues Lys-223, Gln-265, and Glu-273. Asn-287 carries an N-linked (GlcNAc...) asparagine glycan. Trp-317 is a binding site for substrate. A glycan (N-linked (GlcNAc...) asparagine) is linked at Asn-350. His-353 (proton donor/acceptor) is an active-site residue. Residues Asn-390, Asn-395, and Asn-401 are each glycosylated (N-linked (GlcNAc...) asparagine).

Belongs to the carbohydrate esterase 15 (CE15) family.

The protein resides in the secreted. The enzyme catalyses a 4-O-methyl-alpha-D-glucuronosyl ester derivative + H2O = 4-O-methyl-alpha-D-glucuronate derivative + an alcohol + H(+). Functionally, glucuronoyl esterase which may play a significant role in biomass degradation, as it is considered to disconnect hemicellulose from lignin through the hydrolysis of the ester bond between 4-O-methyl-D-glucuronic acid residues of glucuronoxylans and aromatic alcohols of lignin. Can hydrolyze benzyl glucuronic acid (BnGlcA), allyl glucuronic acid (allylGlcA) and to a lower degree methyl glucuronic acid (MeGlcA) in vitro. This chain is 4-O-methyl-glucuronoyl methylesterase 1, found in Wolfiporia cocos (strain MD-104) (Brown rot fungus).